Reading from the N-terminus, the 317-residue chain is NADH-ubiquinone oxidoreductase chain 1 (317 aa).

9 helical membrane passes run 3–23, 37–57, 69–89, 103–123, 141–161, 173–193, 207–227, 247–267, and 282–302; these read YIEL…LTVA, PNAV…KLLL, LILF…WSVI, GFIL…LAGW, LISY…IGGT, AIWY…GCVA, SELV…LFFL, GGTG…YIWV, and LCWM…PAYL.

This sequence belongs to the complex I subunit 1 family.

The protein localises to the mitochondrion inner membrane. The catalysed reaction is a ubiquinone + NADH + 5 H(+)(in) = a ubiquinol + NAD(+) + 4 H(+)(out). In terms of biological role, core subunit of the mitochondrial membrane respiratory chain NADH dehydrogenase (Complex I) that is believed to belong to the minimal assembly required for catalysis. Complex I functions in the transfer of electrons from NADH to the respiratory chain. The immediate electron acceptor for the enzyme is believed to be ubiquinone. In Candida albicans (strain SC5314 / ATCC MYA-2876) (Yeast), this protein is NADH-ubiquinone oxidoreductase chain 1 (NAD1).